Reading from the N-terminus, the 266-residue chain is 5'-nucleotidase SurE (266 aa).

A divalent metal cation-binding residues include D8, D9, S39, and N93.

This sequence belongs to the SurE nucleotidase family. Requires a divalent metal cation as cofactor.

Its subcellular location is the cytoplasm. The enzyme catalyses a ribonucleoside 5'-phosphate + H2O = a ribonucleoside + phosphate. Nucleotidase that shows phosphatase activity on nucleoside 5'-monophosphates. The protein is 5'-nucleotidase SurE of Pyrobaculum arsenaticum (strain DSM 13514 / JCM 11321 / PZ6).